The following is an 828-amino-acid chain: G-type lectin S-receptor-like serine/threonine-protein kinase At2g19130 (828 aa).

Positions 1–22 (MVSFLTLTSFFFICFFIHGSSA) are cleaved as a signal peptide. In terms of domain architecture, Bulb-type lectin spans 23-146 (VDTISGDFTL…GSSLSANVLW (124 aa)). Over 23 to 439 (VDTISGDFTL…GASGKSNNKG (417 aa)) the chain is Extracellular. 6 N-linked (GlcNAc...) asparagine glycosylation sites follow: Asn85, Asn113, Asn203, Asn234, Asn240, and Asn255. One can recognise an EGF-like domain in the interval 286–322 (PRQQCQVYRYCGSFGICSDKSEPFCRCPQGFRPMSQK). Cystine bridges form between Cys290/Cys302, Cys296/Cys310, Cys372/Cys394, and Cys376/Cys382. The PAN domain maps to 341-422 (CSRGDINQFF…EGNIFYLRLA (82 aa)). Residues 440 to 460 (LIFGAVLGSLGVIVLVLLVVI) form a helical membrane-spanning segment. Topologically, residues 461-828 (LILRYRRRKR…KKMTNDNSSA (368 aa)) are cytoplasmic. In terms of domain architecture, Protein kinase spans 493–770 (KNFSDKLGGG…QVVQILEGVL (278 aa)). ATP is bound by residues 499–507 (LGGGGFGSV) and Lys521. Phosphoserine is present on Ser527. The tract at residues 582–600 (VEEKIVLGWKLRFQIALGT) is caM-binding. The active-site Proton acceptor is the Asp619. Thr653 is modified (phosphothreonine). The interval 796-828 (ESSSSSSHNSSQNHKHSSSSSSSKKMTNDNSSA) is disordered. Positions 797–828 (SSSSSSHNSSQNHKHSSSSSSSKKMTNDNSSA) are enriched in low complexity. Ser815 is modified (phosphoserine).

Belongs to the protein kinase superfamily. Ser/Thr protein kinase family.

It localises to the cell membrane. The catalysed reaction is L-seryl-[protein] + ATP = O-phospho-L-seryl-[protein] + ADP + H(+). It carries out the reaction L-threonyl-[protein] + ATP = O-phospho-L-threonyl-[protein] + ADP + H(+). The protein is G-type lectin S-receptor-like serine/threonine-protein kinase At2g19130 of Arabidopsis thaliana (Mouse-ear cress).